The following is a 287-amino-acid chain: MAASLWMGDLEPYMDENFISRAFATMGETVMSVKIIRNRLTGIPAGYCFVEFADLATAEKCLHKINGKPLPGATPAKRFKLNYATYGKQPDNSPEYSLFVGDLTPDVDDGMLYEFFVKVYPSCRGGKVVLDQTGVSKGYGFVKFTDELEQKRALTECQGAIGLGSKPVRLSVAIPKASRVKPVEYSQMYSYSYNQYYQQYQNYYAQWGYDQNTGSYSYSYPQYGYTQSTMQTYEEVGDDALEDPMPQLDVTEANKEFMEQSEELYDALMDCHWQPLDTVSSEIPAMM.

2 consecutive RRM domains span residues 3–86 (ASLW…YATY) and 96–175 (YSLF…VAIP).

The protein belongs to the RRM TRSPAP family. Component of the tRNA(Sec) complex composed at least of EEFSEC, SECISBP2, SEPHS1, SEPSECS, TRNAU1AP and tRNA(Sec). Found in a complex with tRNA(Sec). Interacts with SEPSECS. Associates with mRNP and/or polysomes. Found in a complex with EEFSEC, SECISBP2, TRNAU1AP and tRNA(Sec).

It localises to the nucleus. Its subcellular location is the cytoplasm. Its function is as follows. Involved in the early steps of selenocysteine biosynthesis and tRNA(Sec) charging to the later steps resulting in the cotranslational incorporation of selenocysteine into selenoproteins. Stabilizes the SECISBP2, EEFSEC and tRNA(Sec) complex. May be involved in the methylation of tRNA(Sec). Enhances efficiency of selenoproteins synthesis. The sequence is that of tRNA selenocysteine 1-associated protein 1 (TRNAU1AP) from Bos taurus (Bovine).